Consider the following 545-residue polypeptide: Intercellular adhesion molecule 1 (545 aa).

The first 27 residues, 1–27 (MASTRARPMLPLLLVLVAVVIPGPVGA), serve as a signal peptide directing secretion. At 28 to 492 (QVSIHPTEAF…HLTVLYHDQN (465 aa)) the chain is on the extracellular side. Ig-like C2-type domains follow at residues 41 to 103 (GGSV…QSSA) and 128 to 193 (GKNL…LDLR). Asn47 is a glycosylation site (N-linked (GlcNAc...) asparagine). Intrachain disulfides connect Cys48–Cys92, Cys52–Cys96, and Cys135–Cys186. An N-linked (GlcNAc...) asparagine glycan is attached at Asn154. Residues 177–179 (RGD) carry the Cell attachment site motif. Residues Asn183 and Asn202 are each glycosylated (N-linked (GlcNAc...) asparagine). The Ig-like C2-type 3 domain maps to 230–297 (GTQQKFLCSL…LRCVLELADQ (68 aa)). An intrachain disulfide couples Cys237 to Cys290. Residues Asn309, Asn344, Asn396, Asn417, Asn439, and Asn464 are each glycosylated (N-linked (GlcNAc...) asparagine). The Ig-like C2-type 4 domain occupies 325–389 (GDQVTVKCEA…FFCSAALEVD (65 aa)). A disulfide bridge connects residues Cys332 and Cys382. The disordered stretch occupies residues 343-365 (LNSTSPRPPTSQGTSPRPPTSQI). Cystine bridges form between Cys414-Cys430, Cys430-Cys469, and Cys442-Cys469. The region spanning 423–476 (GSQQTLTCQPQGNPAPNLTCSRKADGVPLPIGMVKSVKREMNGTYKCRAFSSRG) is the Ig-like C2-type 5 domain. Residues 493–517 (TWVIIVGVLVLIIAGFVIVASIYTY) traverse the membrane as a helical segment. Topologically, residues 518–545 (YRQRKIRIYKLQKAQEEALKLKVQAPPP) are cytoplasmic.

The protein belongs to the immunoglobulin superfamily. ICAM family. In terms of assembly, homodimer. Interacts with MUC1 and promotes cell aggregation in epithelial cells. Interacts with ARHGEF26/SGEF. Interacts (on T cell side) with CD81, CD247 and CD9 at immunological synapses between antigen-presenting cells and T cells. Monoubiquitinated, which is promoted by MARCH9 and leads to endocytosis.

It is found in the membrane. Functionally, ICAM proteins are ligands for the leukocyte adhesion protein LFA-1 (integrin alpha-L/beta-2). During leukocyte trans-endothelial migration, ICAM1 engagement promotes the assembly of endothelial apical cups through ARHGEF26/SGEF and RHOG activation. In Rattus norvegicus (Rat), this protein is Intercellular adhesion molecule 1 (Icam1).